The sequence spans 505 residues: TBC1 domain family member 22B (505 aa).

Alanine 2 is modified (N-acetylalanine). A phosphoserine mark is found at serine 58 and serine 116. Residues 105–146 (SKLRVKPERSQSTTSDVPANYKVIKSSSDAQLSRNSSDTCLR) form a disordered region. Over residues 129-146 (KSSSDAQLSRNSSDTCLR) the composition is skewed to polar residues. The residue at position 154 (serine 154) is a Phosphoserine. Residues 210-434 (GVPREVRPVT…RLWDTYQSEP (225 aa)) enclose the Rab-GAP TBC domain.

Interacts with ACBD3 and ARFGEF1. Interacts with YWHAB, YWHAE, YWHAG, YWHAH, YWHAQ and YWHAZ.

May act as a GTPase-activating protein for Rab family protein(s). This is TBC1 domain family member 22B (TBC1D22B) from Macaca fascicularis (Crab-eating macaque).